The primary structure comprises 472 residues: Glutamate--tRNA ligase 2 (472 aa).

Positions Pro-10–Gly-20 match the 'HIGH' region motif. The Zn(2+) site is built by Cys-99, Cys-101, Cys-126, and Asp-128. The span at Glu-112–Asp-130 shows a compositional bias: basic and acidic residues. A disordered region spans residues Glu-112–Val-137. The 'KMSKS' region signature appears at Arg-240–Arg-244. ATP is bound at residue Lys-243.

It belongs to the class-I aminoacyl-tRNA synthetase family. Glutamate--tRNA ligase type 1 subfamily. Monomer. It depends on Zn(2+) as a cofactor.

Its subcellular location is the cytoplasm. It carries out the reaction tRNA(Glu) + L-glutamate + ATP = L-glutamyl-tRNA(Glu) + AMP + diphosphate. In terms of biological role, catalyzes the attachment of glutamate to tRNA(Glu) in a two-step reaction: glutamate is first activated by ATP to form Glu-AMP and then transferred to the acceptor end of tRNA(Glu). This chain is Glutamate--tRNA ligase 2, found in Halorhodospira halophila (strain DSM 244 / SL1) (Ectothiorhodospira halophila (strain DSM 244 / SL1)).